A 278-amino-acid polypeptide reads, in one-letter code: Urease accessory protein UreD (278 aa).

This sequence belongs to the UreD family. In terms of assembly, ureD, UreF and UreG form a complex that acts as a GTP-hydrolysis-dependent molecular chaperone, activating the urease apoprotein by helping to assemble the nickel containing metallocenter of UreC. The UreE protein probably delivers the nickel.

The protein resides in the cytoplasm. Its function is as follows. Required for maturation of urease via the functional incorporation of the urease nickel metallocenter. The chain is Urease accessory protein UreD from Staphylococcus epidermidis (strain ATCC 12228 / FDA PCI 1200).